Here is a 702-residue protein sequence, read N- to C-terminus: Arylphorin (702 aa).

The N-terminal stretch at 1-16 (MQTVLFLAALVSLAAA) is a signal peptide. Residues Asn-211 and Asn-481 are each glycosylated (N-linked (GlcNAc...) asparagine).

This sequence belongs to the hemocyanin family. As to expression, hemolymph.

It localises to the secreted. Its function is as follows. Larval storage protein (LSP) which may serve as a store of amino acids for synthesis of adult proteins. Binds the A.niger cell wall component alpha-1,3-glucan, a fungal pathogen-associated molecular pattern (PAMP) that activates the host immune response. The sequence is that of Arylphorin (LOC113516268) from Galleria mellonella (Greater wax moth).